A 290-amino-acid chain; its full sequence is MDPSVLLYNQLKAADPFFLLAGPNVIESEEHIMRMAKHIKTISSKFGIPLIFKSSFDKANRTSSKSFRGPGIVEGLKILEKVKIAYDIPIVTDVHEASQCEPVGRVADIIQIPAFLCRQTDLLVAAAKTGKIINIKKGQFCAPSVMANSAEKVRLAGNPNVMVCERGTMFGYNDLIVDPRNLEWMREANCPVVADITHSLQQPAGKKLDGGGVASGGLRELIPCIARTSVAVGVDGIFMEVHDDPLNAPVDGPTQWPLRHLEELLEELIAISRVSKGKKPFNIDLTPFRE.

This sequence belongs to the KdsA family.

The protein localises to the cytoplasm. It catalyses the reaction D-arabinose 5-phosphate + phosphoenolpyruvate + H2O = 3-deoxy-alpha-D-manno-2-octulosonate-8-phosphate + phosphate. This Pisum sativum (Garden pea) protein is 2-dehydro-3-deoxyphosphooctonate aldolase (KDSA).